Here is a 239-residue protein sequence, read N- to C-terminus: Serine protease SplC (239 aa).

The N-terminal stretch at 1–36 (MNKNIVIKSMAALAILTSVTGINAAVVEETQQIANA) is a signal peptide. Active-site charge relay system residues include histidine 75, aspartate 113, and serine 193.

This sequence belongs to the peptidase S1B family.

The protein localises to the secreted. In Staphylococcus aureus (strain USA300 / TCH1516), this protein is Serine protease SplC (splC).